Consider the following 946-residue polypeptide: Bifunctional glutamine synthetase adenylyltransferase/adenylyl-removing enzyme (946 aa).

Residues 1-440 are adenylyl removase; sequence MKPLSSPLQQ…VFNELIGDDE (440 aa). The tract at residues 449–946 is adenylyl transferase; that stretch reads SEQWRELWQD…VSWQKWLVEE (498 aa).

It belongs to the GlnE family. Requires Mg(2+) as cofactor.

It catalyses the reaction [glutamine synthetase]-O(4)-(5'-adenylyl)-L-tyrosine + phosphate = [glutamine synthetase]-L-tyrosine + ADP. It carries out the reaction [glutamine synthetase]-L-tyrosine + ATP = [glutamine synthetase]-O(4)-(5'-adenylyl)-L-tyrosine + diphosphate. Functionally, involved in the regulation of glutamine synthetase GlnA, a key enzyme in the process to assimilate ammonia. When cellular nitrogen levels are high, the C-terminal adenylyl transferase (AT) inactivates GlnA by covalent transfer of an adenylyl group from ATP to specific tyrosine residue of GlnA, thus reducing its activity. Conversely, when nitrogen levels are low, the N-terminal adenylyl removase (AR) activates GlnA by removing the adenylyl group by phosphorolysis, increasing its activity. The regulatory region of GlnE binds the signal transduction protein PII (GlnB) which indicates the nitrogen status of the cell. In Escherichia coli (strain SMS-3-5 / SECEC), this protein is Bifunctional glutamine synthetase adenylyltransferase/adenylyl-removing enzyme.